The primary structure comprises 361 residues: Protein RecA (361 aa).

An ATP-binding site is contributed by 77–84; that stretch reads GPESSGKT.

It belongs to the RecA family.

It localises to the cytoplasm. Functionally, can catalyze the hydrolysis of ATP in the presence of single-stranded DNA, the ATP-dependent uptake of single-stranded DNA by duplex DNA, and the ATP-dependent hybridization of homologous single-stranded DNAs. It interacts with LexA causing its activation and leading to its autocatalytic cleavage. This chain is Protein RecA, found in Brucella anthropi (strain ATCC 49188 / DSM 6882 / CCUG 24695 / JCM 21032 / LMG 3331 / NBRC 15819 / NCTC 12168 / Alc 37) (Ochrobactrum anthropi).